A 547-amino-acid chain; its full sequence is Cytochrome P450 monooxygenase oblB (547 aa).

2 helical membrane passes run 42-62 (GAVG…RLFL) and 242-262 (FDMF…PWLI). N-linked (GlcNAc...) asparagine glycosylation is present at Asn277. Residues 345 to 365 (VLIGSGTMTTAGTMGFLCYYI) form a helical membrane-spanning segment. Cys489 is a binding site for heme.

The protein belongs to the cytochrome P450 family. Heme is required as a cofactor.

It localises to the membrane. The catalysed reaction is ophiobolin F + 4 reduced [NADPH--hemoprotein reductase] + 4 O2 = ophiobolin C + 4 oxidized [NADPH--hemoprotein reductase] + 6 H2O + 4 H(+). The protein operates within secondary metabolite biosynthesis; terpenoid biosynthesis. Its function is as follows. Cytochrome P450 monooxygenase; part of the gene cluster that mediates the biosynthesis of the sesterterpenes ophiobolins, fungal phytotoxins with potential anti-cancer activities. The first step of the pathway is performed by the sesterterpene synthase oblA that possesses both prenyl transferase and terpene cyclase activity, converting isopentenyl diphosphate and dimethylallyl diphosphate into geranylfarnesyl diphosphate (GFPP) and further converting GFPP into ophiobolin F, respectively. Other sesterterpenoids (C(25) terpenoids) are found as minor products of oblA. The cytochrome P450 monooxygenase oblB then catalyzes a four-step oxidative transformation of ophiobolin F to yield ophiobolin C. The function of the cytochrome P450 monooxygenase oblE has still to be determined. This chain is Cytochrome P450 monooxygenase oblB, found in Emericella variicolor (Aspergillus stellatus).